The sequence spans 206 residues: Thymidylate kinase (206 aa).

7 to 14 (GGEGVGKT) is a binding site for ATP.

It belongs to the thymidylate kinase family.

It catalyses the reaction dTMP + ATP = dTDP + ADP. Its function is as follows. Phosphorylation of dTMP to form dTDP in both de novo and salvage pathways of dTTP synthesis. This Synechococcus sp. (strain JA-2-3B'a(2-13)) (Cyanobacteria bacterium Yellowstone B-Prime) protein is Thymidylate kinase.